Reading from the N-terminus, the 162-residue chain is Large ribosomal subunit protein uL22c (162 aa).

This sequence belongs to the universal ribosomal protein uL22 family. As to quaternary structure, part of the 50S ribosomal subunit.

The protein localises to the plastid. The protein resides in the chloroplast. This protein binds specifically to 23S rRNA. Its function is as follows. The globular domain of the protein is located near the polypeptide exit tunnel on the outside of the subunit, while an extended beta-hairpin is found that lines the wall of the exit tunnel in the center of the 70S ribosome. The chain is Large ribosomal subunit protein uL22c (rpl22) from Cucumis sativus (Cucumber).